A 516-amino-acid chain; its full sequence is Cytochrome P450 1A2 (516 aa).

An O-linked (GlcNAc) serine glycan is attached at Ser-69. Phe-226 contributes to the substrate binding site. Cys-458 is a binding site for heme.

Belongs to the cytochrome P450 family. Interacts with PGRMC1; the interaction requires PGRMC1 homodimerization. The cofactor is heme.

The protein localises to the endoplasmic reticulum membrane. It localises to the microsome membrane. It carries out the reaction an organic molecule + reduced [NADPH--hemoprotein reductase] + O2 = an alcohol + oxidized [NADPH--hemoprotein reductase] + H2O + H(+). The catalysed reaction is 17beta-estradiol + reduced [NADPH--hemoprotein reductase] + O2 = 2-hydroxy-17beta-estradiol + oxidized [NADPH--hemoprotein reductase] + H2O + H(+). The enzyme catalyses 17beta-estradiol + reduced [NADPH--hemoprotein reductase] + O2 = 4-hydroxy-17beta-estradiol + oxidized [NADPH--hemoprotein reductase] + H2O + H(+). It catalyses the reaction estrone + reduced [NADPH--hemoprotein reductase] + O2 = 2-hydroxyestrone + oxidized [NADPH--hemoprotein reductase] + H2O + H(+). It carries out the reaction estrone + reduced [NADPH--hemoprotein reductase] + O2 = 4-hydroxyestrone + oxidized [NADPH--hemoprotein reductase] + H2O + H(+). The catalysed reaction is cholesterol + reduced [NADPH--hemoprotein reductase] + O2 = 25-hydroxycholesterol + oxidized [NADPH--hemoprotein reductase] + H2O + H(+). The enzyme catalyses all-trans-retinol + reduced [NADPH--hemoprotein reductase] + O2 = all-trans-retinal + oxidized [NADPH--hemoprotein reductase] + 2 H2O + H(+). It catalyses the reaction all-trans-retinal + reduced [NADPH--hemoprotein reductase] + O2 = all-trans-retinoate + oxidized [NADPH--hemoprotein reductase] + H2O + 2 H(+). It carries out the reaction (5Z,8Z,11Z,14Z)-eicosatetraenoate + reduced [NADPH--hemoprotein reductase] + O2 = (14R,15S)-epoxy-(5Z,8Z,11Z)-eicosatrienoate + oxidized [NADPH--hemoprotein reductase] + H2O + H(+). The catalysed reaction is (5Z,8Z,11Z,14Z)-eicosatetraenoate + reduced [NADPH--hemoprotein reductase] + O2 = (14S,15R)-epoxy-(5Z,8Z,11Z)-eicosatrienoate + oxidized [NADPH--hemoprotein reductase] + H2O + H(+). The enzyme catalyses (5Z,8Z,11Z,14Z,17Z)-eicosapentaenoate + reduced [NADPH--hemoprotein reductase] + O2 = (17R,18S)-epoxy-(5Z,8Z,11Z,14Z)-eicosatetraenoate + oxidized [NADPH--hemoprotein reductase] + H2O + H(+). It catalyses the reaction (4Z,7Z,10Z,13Z,16Z,19Z)-docosahexaenoate + reduced [NADPH--hemoprotein reductase] + O2 = (19R,20S)-epoxy-(4Z,7Z,10Z,13Z,16Z)-docosapentaenoate + oxidized [NADPH--hemoprotein reductase] + H2O + H(+). It carries out the reaction (5S)-hydroperoxy-(6E,8Z,11Z,14Z)-eicosatetraenoate = 5-oxo-(6E,8Z,11Z,14Z)-eicosatetraenoate + H2O. The catalysed reaction is (12S)-hydroperoxy-(5Z,8Z,10E,14Z)-eicosatetraenoate = 12-oxo-(5Z,8Z,10E,14Z)-eicosatetraenoate + H2O. The enzyme catalyses (15S)-hydroperoxy-(5Z,8Z,11Z,13E)-eicosatetraenoate = 15-oxo-(5Z,8Z,11Z,13E)-eicosatetraenoate + H2O. It catalyses the reaction (13S)-hydroperoxy-(9Z,11E)-octadecadienoate = 13-oxo-(9Z,11E)-octadecadienoate + H2O. It carries out the reaction (5Z,8Z,11Z,14Z)-eicosatetraenoate + reduced [NADPH--hemoprotein reductase] + O2 = 13-hydroxy-(5Z,8Z,11Z,14Z)-eicosatetraenoate + oxidized [NADPH--hemoprotein reductase] + H2O + H(+). The catalysed reaction is (5Z,8Z,11Z,14Z)-eicosatetraenoate + reduced [NADPH--hemoprotein reductase] + O2 = 19-hydroxy-(5Z,8Z,11Z,14Z)-eicosatetraenoate + oxidized [NADPH--hemoprotein reductase] + H2O + H(+). The enzyme catalyses (9Z,12Z)-octadecadienoate + reduced [NADPH--hemoprotein reductase] + O2 = 11-hydroxy-(9Z,12Z)-octadecadienoate + oxidized [NADPH--hemoprotein reductase] + H2O + H(+). It functions in the pathway cofactor metabolism; retinol metabolism. Its pathway is steroid metabolism; cholesterol metabolism. The protein operates within lipid metabolism; arachidonate metabolism. Its function is as follows. A cytochrome P450 monooxygenase involved in the metabolism of various endogenous substrates, including fatty acids, steroid hormones and vitamins. Mechanistically, uses molecular oxygen inserting one oxygen atom into a substrate, and reducing the second into a water molecule, with two electrons provided by NADPH via cytochrome P450 reductase (NADPH--hemoprotein reductase). Catalyzes the hydroxylation of carbon-hydrogen bonds. Exhibits high catalytic activity for the formation of hydroxyestrogens from estrone (E1) and 17beta-estradiol (E2), namely 2-hydroxy E1 and E2. Metabolizes cholesterol toward 25-hydroxycholesterol, a physiological regulator of cellular cholesterol homeostasis. May act as a major enzyme for all-trans retinoic acid biosynthesis in the liver. Catalyzes two successive oxidative transformation of all-trans retinol to all-trans retinal and then to the active form all-trans retinoic acid. Primarily catalyzes stereoselective epoxidation of the last double bond of polyunsaturated fatty acids (PUFA), displaying a strong preference for the (R,S) stereoisomer. Catalyzes bisallylic hydroxylation and omega-1 hydroxylation of PUFA. May also participate in eicosanoids metabolism by converting hydroperoxide species into oxo metabolites (lipoxygenase-like reaction, NADPH-independent). Plays a role in the oxidative metabolism of xenobiotics. Catalyzes the N-hydroxylation of heterocyclic amines and the O-deethylation of phenacetin. Metabolizes caffeine via N3-demethylation. The sequence is that of Cytochrome P450 1A2 (CYP1A2) from Callithrix jacchus (White-tufted-ear marmoset).